Reading from the N-terminus, the 906-residue chain is Eukaryotic translation initiation factor 3 subunit C (906 aa).

Residues 1-22 are disordered; sequence MSRFFANGSDSESESSEEEVQA. Residues 11–20 are compositionally biased toward acidic residues; sequence SESESSEEEV. 4 positions are modified to phosphoserine: Ser-34, Ser-165, Ser-176, and Ser-185. The segment at 158–283 is disordered; the sequence is REAPDQESEA…KRPEDDEDGE (126 aa). The segment covering 162 to 186 has biased composition (acidic residues); that stretch reads DQESEAEDEEAAQDSDGGDAGDDSD. Residues 195 to 209 show a composition bias toward low complexity; the sequence is EAAPKVAKTVPAKAA. The segment covering 211–237 has biased composition (acidic residues); the sequence is ADDDDSDDSIDWDSDSETETESSDDEN. A compositionally biased stretch (basic and acidic residues) spans 242–270; the sequence is MRERFLKRTTEKEEKDDDKRKDKRKEQKI. One can recognise a PCI domain in the interval 641-817; sequence FHMHINLELL…ETVVMHRSEP (177 aa). Disordered stretches follow at residues 853–873 and 887–906; these read GNMGNRGDRGYNRNQDGNWGG and QRGRKHQQQQQQQVQTIDEE. Residues 894-906 are compositionally biased toward low complexity; sequence QQQQQQVQTIDEE.

This sequence belongs to the eIF-3 subunit C family. Component of the eukaryotic translation initiation factor 3 (eIF-3) complex. The eIF-3 complex interacts with pix.

Its subcellular location is the cytoplasm. In terms of biological role, component of the eukaryotic translation initiation factor 3 (eIF-3) complex, which is involved in protein synthesis of a specialized repertoire of mRNAs and, together with other initiation factors, stimulates binding of mRNA and methionyl-tRNAi to the 40S ribosome. The eIF-3 complex specifically targets and initiates translation of a subset of mRNAs involved in cell proliferation. This chain is Eukaryotic translation initiation factor 3 subunit C, found in Drosophila ananassae (Fruit fly).